The primary structure comprises 299 residues: Acetylglutamate kinase (299 aa).

Substrate-binding positions include 72 to 73 (GG), R94, and N196.

This sequence belongs to the acetylglutamate kinase family. ArgB subfamily.

The protein localises to the cytoplasm. It catalyses the reaction N-acetyl-L-glutamate + ATP = N-acetyl-L-glutamyl 5-phosphate + ADP. It participates in amino-acid biosynthesis; L-arginine biosynthesis; N(2)-acetyl-L-ornithine from L-glutamate: step 2/4. Functionally, catalyzes the ATP-dependent phosphorylation of N-acetyl-L-glutamate. The protein is Acetylglutamate kinase of Burkholderia mallei (strain NCTC 10247).